We begin with the raw amino-acid sequence, 172 residues long: MSKKTDRVIMNDDIRVPEVRCNVDGAESLGIVSTDEAMERANELGLDLVLIAPDAKPPVAKIMDYGKYRYQEERKLKEQKKNQVKIDVKEIKLSVKIAENDINYKVKHAREFLAEGKHVKFRVFLKGREMANPESAKDVLLRVWAMIEDVGVMDKEPKFEGRYYNMYVLPQK.

It belongs to the IF-3 family. Monomer.

The protein localises to the cytoplasm. Its function is as follows. IF-3 binds to the 30S ribosomal subunit and shifts the equilibrium between 70S ribosomes and their 50S and 30S subunits in favor of the free subunits, thus enhancing the availability of 30S subunits on which protein synthesis initiation begins. This Sulfurimonas denitrificans (strain ATCC 33889 / DSM 1251) (Thiomicrospira denitrificans (strain ATCC 33889 / DSM 1251)) protein is Translation initiation factor IF-3.